The sequence spans 132 residues: Thioredoxin H4-2 (132 aa).

Positions 18–130 constitute a Thioredoxin domain; it reads DFKGGNVHVI…LEKKVQALAD (113 aa). Active-site nucleophile residues include Cys-56 and Cys-59. The cysteines at positions 56 and 59 are disulfide-linked.

It belongs to the thioredoxin family. Plant H-type subfamily.

It localises to the cytoplasm. Its function is as follows. Probable thiol-disulfide oxidoreductase that may be involved in the redox regulation of a number of cytosolic enzymes. In Oryza sativa subsp. japonica (Rice), this protein is Thioredoxin H4-2.